We begin with the raw amino-acid sequence, 231 residues long: Large ribosomal subunit protein uL1 (231 aa).

The protein belongs to the universal ribosomal protein uL1 family. Part of the 50S ribosomal subunit.

Its function is as follows. Binds directly to 23S rRNA. The L1 stalk is quite mobile in the ribosome, and is involved in E site tRNA release. Functionally, protein L1 is also a translational repressor protein, it controls the translation of the L11 operon by binding to its mRNA. This chain is Large ribosomal subunit protein uL1, found in Methylococcus capsulatus (strain ATCC 33009 / NCIMB 11132 / Bath).